Reading from the N-terminus, the 463-residue chain is Adenosylhomocysteinase (463 aa).

Threonine 54, aspartate 128, and glutamate 189 together coordinate substrate. 190–192 is an NAD(+) binding site; sequence TTT. 2 residues coordinate substrate: lysine 219 and aspartate 223. NAD(+) is bound by residues asparagine 224, 253–258, glutamate 276, asparagine 311, 332–334, and asparagine 377; these read GYGDVG and IGH.

The protein belongs to the adenosylhomocysteinase family. In terms of assembly, homotetramer. The cofactor is NAD(+).

It localises to the cytoplasm. It catalyses the reaction S-adenosyl-L-homocysteine + H2O = L-homocysteine + adenosine. Its pathway is amino-acid biosynthesis; L-homocysteine biosynthesis; L-homocysteine from S-adenosyl-L-homocysteine: step 1/1. Its function is as follows. May play a key role in the regulation of the intracellular concentration of adenosylhomocysteine. The chain is Adenosylhomocysteinase from Rhodobacter capsulatus (strain ATCC BAA-309 / NBRC 16581 / SB1003).